The primary structure comprises 98 residues: NADH-ubiquinone oxidoreductase chain 4L (98 aa).

The next 3 helical transmembrane spans lie at 1–21, 28–48, and 59–79; these read MMSI…GVLI, STLL…ALLI, and APLV…ALLV.

Belongs to the complex I subunit 4L family. As to quaternary structure, core subunit of respiratory chain NADH dehydrogenase (Complex I) which is composed of 45 different subunits.

The protein localises to the mitochondrion inner membrane. It catalyses the reaction a ubiquinone + NADH + 5 H(+)(in) = a ubiquinol + NAD(+) + 4 H(+)(out). Functionally, core subunit of the mitochondrial membrane respiratory chain NADH dehydrogenase (Complex I) which catalyzes electron transfer from NADH through the respiratory chain, using ubiquinone as an electron acceptor. Part of the enzyme membrane arm which is embedded in the lipid bilayer and involved in proton translocation. This is NADH-ubiquinone oxidoreductase chain 4L (MT-ND4L) from Pseudocheirus peregrinus (Common ring-tailed possum).